A 310-amino-acid polypeptide reads, in one-letter code: Methionyl-tRNA formyltransferase (310 aa).

109-112 (SLLP) serves as a coordination point for (6S)-5,6,7,8-tetrahydrofolate.

The protein belongs to the Fmt family.

It carries out the reaction L-methionyl-tRNA(fMet) + (6R)-10-formyltetrahydrofolate = N-formyl-L-methionyl-tRNA(fMet) + (6S)-5,6,7,8-tetrahydrofolate + H(+). Attaches a formyl group to the free amino group of methionyl-tRNA(fMet). The formyl group appears to play a dual role in the initiator identity of N-formylmethionyl-tRNA by promoting its recognition by IF2 and preventing the misappropriation of this tRNA by the elongation apparatus. The polypeptide is Methionyl-tRNA formyltransferase (Pseudomonas putida (strain W619)).